The following is a 162-amino-acid chain: CASP-like protein 1C1 (162 aa).

Topologically, residues 1-7 (MFSAKAR) are cytoplasmic. Residues 8 to 28 (WIVAVVLRVAAAGAAAVAAVL) form a helical membrane-spanning segment. Residues 29–52 (MAMSHDEVIVYGMEVQAKFRYTPS) are Extracellular-facing. A helical membrane pass occupies residues 53–73 (LVFFVAANAAVSACSLVVLLV). At 74-83 (PSSTSKLAAR) the chain is on the cytoplasmic side. The chain crosses the membrane as a helical span at residues 84–104 (LLLMADVVLGMVLAGAFAAAG). Residues 105–135 (AMAELGKNGNSHAGWIAICVQVPLFCDRVRS) lie on the Extracellular side of the membrane. A helical transmembrane segment spans residues 136–156 (ALVAGSATIVLYYLMLMYSIY). Residues 157-162 (TLPMFP) are Cytoplasmic-facing.

Belongs to the Casparian strip membrane proteins (CASP) family. As to quaternary structure, homodimer and heterodimers.

It localises to the cell membrane. This Oryza sativa subsp. japonica (Rice) protein is CASP-like protein 1C1.